Here is a 116-residue protein sequence, read N- to C-terminus: Non-specific lipid-transfer protein 10 (116 aa).

Residues 1–22 (MMRVVLPLCLLLASIFAWGSEA) form the signal peptide. Disulfide bonds link Cys26–Cys73, Cys36–Cys50, Cys51–Cys98, and Cys71–Cys112.

It belongs to the plant LTP family.

Its function is as follows. Plant non-specific lipid-transfer proteins transfer phospholipids as well as galactolipids across membranes. May play a role in wax or cutin deposition in the cell walls of expanding epidermal cells and certain secretory tissues. The polypeptide is Non-specific lipid-transfer protein 10 (LTP10) (Arabidopsis thaliana (Mouse-ear cress)).